We begin with the raw amino-acid sequence, 340 residues long: DNA-directed RNA polymerase subunit alpha (340 aa).

An alpha N-terminal domain (alpha-NTD) region spans residues 1-236 (MSVIQKNWQE…DQLQLFINFE (236 aa)). Residues 252–340 (FNKNLLRKVD…DLAKKLEEPY (89 aa)) form an alpha C-terminal domain (alpha-CTD) region.

Belongs to the RNA polymerase alpha chain family. As to quaternary structure, homodimer. The RNAP catalytic core consists of 2 alpha, 1 beta, 1 beta' and 1 omega subunit. When a sigma factor is associated with the core the holoenzyme is formed, which can initiate transcription.

The enzyme catalyses RNA(n) + a ribonucleoside 5'-triphosphate = RNA(n+1) + diphosphate. In terms of biological role, DNA-dependent RNA polymerase catalyzes the transcription of DNA into RNA using the four ribonucleoside triphosphates as substrates. This is DNA-directed RNA polymerase subunit alpha from Rhodospirillum rubrum (strain ATCC 11170 / ATH 1.1.1 / DSM 467 / LMG 4362 / NCIMB 8255 / S1).